Consider the following 330-residue polypeptide: Transcription factor zip1 (330 aa).

Basic and acidic residues predominate over residues 133–148; it reads SKETQEKTSSQRELFE. Disordered regions lie at residues 133-165 and 238-277; these read SKETQEKTSSQRELFEQKSSVASASKDNVSSSS and PSLSSYKGAQSPNANSKRTKATSAIRTAAEEDKRRRNTAA. The segment covering 150-165 has biased composition (low complexity); that stretch reads KSSVASASKDNVSSSS. The segment covering 244–262 has biased composition (polar residues); it reads KGAQSPNANSKRTKATSAI. Positions 264-327 constitute a bZIP domain; the sequence is TAAEEDKRRR…NWLKGLIRPT (64 aa). Residues 270-288 are basic motif; it reads KRRRNTAASARFRIKKKLK. The leucine-zipper stretch occupies residues 292 to 320; that stretch reads LERTAKELTEKVAILETRVRELEMENNWL.

Belongs to the bZIP family. In terms of assembly, interacts with pof1.

The protein resides in the nucleus. In terms of biological role, mediates cell growth arrest in response to cadmium exposure, which is essential to maintain cell viability. Regulates cadmium stress specific genes. This is Transcription factor zip1 (zip1) from Schizosaccharomyces pombe (strain 972 / ATCC 24843) (Fission yeast).